A 373-amino-acid polypeptide reads, in one-letter code: Velvet complex subunit RYP3 (373 aa).

Residues Met-1 to His-10 show a composition bias toward basic and acidic residues. 2 disordered regions span residues Met-1–Gly-26 and Arg-344–Gly-373. Residues Val-48–Arg-344 enclose the Velvet domain. Over residues Gly-364 to Gly-373 the composition is skewed to acidic residues.

It belongs to the velvet family. VelB subfamily. In terms of assembly, component of the heterotrimeric velvet complex composed of LAE1, VEL1 and VEL2; VEL1A acting as a bridging protein between LAE1 and VEL2. Forms a heterodimeric complex with VOS1; the formation of the VEL2-VOS1 complex is light-dependent.

Its subcellular location is the nucleus. It is found in the cytoplasm. Component of the velvet transcription factor complex that controls sexual/asexual developmental ratio in response to light, promoting sexual development in the darkness while stimulating asexual sporulation under illumination. The velvet complex acts as a global regulator for secondary metabolite gene expression. Component of the RYP2-RYP3 heterodimeric complex that plays a dual role in activating genes associated with spore maturation and repressing certain development-associated genes. The complex binds DNA through the DNA-binding domain of RYP2 that recognizes an 11-nucleotide consensus sequence 5'-CTGGCCGCGGC-3' consisting of two motifs in the promoters of key developmental regulatory genes. Required for viable spore production and regulation of sporulation in response to temperature, as well as for the switch to yeast-form in the presence of host cells. This chain is Velvet complex subunit RYP3 (RYP3), found in Ajellomyces capsulatus (Darling's disease fungus).